We begin with the raw amino-acid sequence, 252 residues long: D-aminoacyl-tRNA deacylase (252 aa).

It belongs to the DtdA deacylase family. In terms of assembly, monomer. Zn(2+) is required as a cofactor.

The enzyme catalyses a D-aminoacyl-tRNA + H2O = a tRNA + a D-alpha-amino acid + H(+). The catalysed reaction is glycyl-tRNA(Ala) + H2O = tRNA(Ala) + glycine + H(+). Its function is as follows. D-aminoacyl-tRNA deacylase with broad substrate specificity. By recycling D-aminoacyl-tRNA to D-amino acids and free tRNA molecules, this enzyme counteracts the toxicity associated with the formation of D-aminoacyl-tRNA entities in vivo. In Pyrobaculum islandicum (strain DSM 4184 / JCM 9189 / GEO3), this protein is D-aminoacyl-tRNA deacylase.